Reading from the N-terminus, the 810-residue chain is Chloride channel protein (810 aa).

The Cytoplasmic segment spans residues 2-48 (SHEKNEASGNPEAQSWKAQEAMLGVKTEVSRWRAVKNCLYRHLVKVL). 2 consecutive transmembrane segments (helical) span residues 49-86 (GEDWIFLLLLGALMALVSWAMDFIGSRGLRFYKYLFAM) and 93-116 (LQYLVWVCYPLILILFSSLFCQIV). The Selectivity filter part_1 signature appears at 122–126 (GSGIP). Ser123 lines the chloride pocket. An intramembrane region (helical) is located at residues 125–132 (IPELKTII). 2 helical membrane-spanning segments follow: residues 141 to 160 (LTLRTFVAKTVGLTVALSAG) and 166 to 184 (EGPFVHIASICATLLNQLL). Positions 164-168 (GKEGP) match the Selectivity filter part_2 motif. 2 consecutive intramembrane regions (helical) follow at residues 201-213 (ILTVGCALGISCC) and 217-225 (PLAGVLFSI). 3 consecutive transmembrane segments (helical) span residues 237–254 (YWRGFLGGAFSAFIFRVL), 283–311 (LPAFAIIGIASGFFGALFVYLNRQIIVFM), and 320–339 (ILKKQRLIYPAVVTFVLATL). N-linked (GlcNAc...) asparagine glycosylation is present at Asn365. A run of 2 helical transmembrane segments spans residues 389–408 (NIFIVMALYFVMHFWMAALA) and 416–439 (GAFVPVFNLGAVLGRFVGELMALL). The Selectivity filter part_3 signature appears at 416–420 (GAFVP). Phe418 contacts chloride. The helical intramembrane region spans 456–470 (GEYAVIGAAAMTGAV). Residues 471-472 (TH) constitute an intramembrane region (note=Loop between two helices). The helical intramembrane region spans 473–484 (AVSTAVICFELT). The note=Loop between two helices intramembrane region spans 485–489 (GQISH). Residues 490–506 (VLPMMVAVILANMVAQG) form a helical membrane-spanning segment. Over 507 to 810 (LQPSLYDSII…RTATSNSSGK (304 aa)) the chain is Cytoplasmic. Tyr512 provides a ligand contact to chloride. The CBS 1 domain occupies 543 to 601 (MVRDVTSIASTSTYGDLLHVLRQTKLKFFPFVDTPETNTLLGSIERTEVEGLLQRRISA). Disordered regions lie at residues 604–631 (RQPATAAEAEEEGRNGERGASFTGDVPG) and 658–688 (KVQTEDPRPPSPVPAEEPTQTSGIYQKKHKG). A CBS 2 domain is found at 724–781 (IDQSPFQLVEGTSLQKTHTLFSLLGLDRAYVTSMGKLVGVVALAEIQAAIEGSYQKGF).

Belongs to the chloride channel (TC 2.A.49) family. ClC-0 subfamily. As to quaternary structure, homodimer. Each subunit has channel activity ('Double barreled channel').

It localises to the membrane. Functionally, voltage-gated chloride channel. This channel is thought to ensure the high conductance of the non-innervated membrane of the electrocyte necessary for efficient current generation caused by sodium influx through the acetylcholine receptor at the innervated membrane. This Tetronarce californica (Pacific electric ray) protein is Chloride channel protein.